The sequence spans 429 residues: Adenylosuccinate synthetase (429 aa).

GTP contacts are provided by residues 12 to 18 and 40 to 42; these read GDEGKGK and GHT. The Proton acceptor role is filled by aspartate 13. Residues aspartate 13 and glycine 40 each coordinate Mg(2+). Residues 13–16, 38–41, threonine 128, arginine 142, glutamine 223, threonine 238, and arginine 302 each bind IMP; these read DEGK and NAGH. Histidine 41 functions as the Proton donor in the catalytic mechanism. 298–304 lines the substrate pocket; sequence TTTGRPR. Residues arginine 304, 330-332, and 412-414 contribute to the GTP site; these read SID and SVG.

This sequence belongs to the adenylosuccinate synthetase family. Homodimer. The cofactor is Mg(2+).

The protein resides in the cytoplasm. It catalyses the reaction IMP + L-aspartate + GTP = N(6)-(1,2-dicarboxyethyl)-AMP + GDP + phosphate + 2 H(+). The protein operates within purine metabolism; AMP biosynthesis via de novo pathway; AMP from IMP: step 1/2. Its function is as follows. Plays an important role in the de novo pathway of purine nucleotide biosynthesis. Catalyzes the first committed step in the biosynthesis of AMP from IMP. The protein is Adenylosuccinate synthetase of Lysinibacillus sphaericus (strain C3-41).